Here is a 1392-residue protein sequence, read N- to C-terminus: DNA-directed RNA polymerase subunit beta'' (1392 aa).

The Zn(2+) site is built by Cys-224, Cys-295, Cys-302, and Cys-305.

It belongs to the RNA polymerase beta' chain family. RpoC2 subfamily. In terms of assembly, in plastids the minimal PEP RNA polymerase catalytic core is composed of four subunits: alpha, beta, beta', and beta''. When a (nuclear-encoded) sigma factor is associated with the core the holoenzyme is formed, which can initiate transcription. Zn(2+) serves as cofactor.

It localises to the plastid. The protein resides in the chloroplast. It catalyses the reaction RNA(n) + a ribonucleoside 5'-triphosphate = RNA(n+1) + diphosphate. DNA-dependent RNA polymerase catalyzes the transcription of DNA into RNA using the four ribonucleoside triphosphates as substrates. This chain is DNA-directed RNA polymerase subunit beta'', found in Solanum bulbocastanum (Wild potato).